Reading from the N-terminus, the 55-residue chain is Large ribosomal subunit protein bL32 (55 aa).

The disordered stretch occupies residues 1 to 28 (MAVQQNKPTRSKRGMRRSHDALTTATLS).

This sequence belongs to the bacterial ribosomal protein bL32 family.

The chain is Large ribosomal subunit protein bL32 from Serratia proteamaculans (strain 568).